Consider the following 473-residue polypeptide: Photosystem II CP43 reaction center protein (473 aa).

Residues 1–14 constitute a propeptide that is removed on maturation; sequence MKTLYSLRRFYHVE. An N-acetylthreonine modification is found at Thr-15. A Phosphothreonine modification is found at Thr-15. 5 helical membrane-spanning segments follow: residues 69-93, 134-155, 178-200, 255-275, and 291-312; these read LFEV…PHLA, LIGP…KDKN, KACY…RIIT, KPWA…LSYS, and WFNN…ASQA. Residue Glu-367 coordinates [CaMn4O5] cluster. The helical transmembrane segment at 447 to 471 threads the bilayer; that stretch reads RARAAAAGFEKGIERETEPVLFMKP.

Belongs to the PsbB/PsbC family. PsbC subfamily. As to quaternary structure, PSII is composed of 1 copy each of membrane proteins PsbA, PsbB, PsbC, PsbD, PsbE, PsbF, PsbH, PsbI, PsbJ, PsbK, PsbL, PsbM, PsbT, PsbX, PsbY, PsbZ, Psb30/Ycf12, at least 3 peripheral proteins of the oxygen-evolving complex and a large number of cofactors. It forms dimeric complexes. The cofactor is Binds multiple chlorophylls and provides some of the ligands for the Ca-4Mn-5O cluster of the oxygen-evolving complex. It may also provide a ligand for a Cl- that is required for oxygen evolution. PSII binds additional chlorophylls, carotenoids and specific lipids..

It localises to the plastid. It is found in the chloroplast thylakoid membrane. Its function is as follows. One of the components of the core complex of photosystem II (PSII). It binds chlorophyll and helps catalyze the primary light-induced photochemical processes of PSII. PSII is a light-driven water:plastoquinone oxidoreductase, using light energy to abstract electrons from H(2)O, generating O(2) and a proton gradient subsequently used for ATP formation. The sequence is that of Photosystem II CP43 reaction center protein from Mesostigma viride (Green alga).